The chain runs to 334 residues: Kihadalactone A synthase LFS (334 aa).

The region spanning 181-286 (KTASYSNMFH…RYSTGLFLCP (106 aa)) is the Fe2OG dioxygenase domain. Fe cation contacts are provided by His208, Asp210, and His269. Residue Arg277 coordinates 2-oxoglutarate.

It belongs to the iron/ascorbate-dependent oxidoreductase family. It depends on Fe(2+) as a cofactor. As to expression, expressed in maturing fruits and in juice vesicles.

The enzyme catalyses (1R,2R,3S,8R,10R,11R,15S,16S)-3-(acetyloxy)-15-(1-hydroxy-4-oxobutan-2-yl)-2,7,7,11,16-pentamethyl-5-oxo-6-oxatetracyclo[9.7.0.0(2,8).0(12,16)]octadec-12-en-10-yl acetate + 2-oxoglutarate + O2 = kihadalactone A + succinate + CO2 + 2 H2O. It participates in secondary metabolite biosynthesis; terpenoid biosynthesis. Functionally, 2-oxoglutarate-Fe(II) type oxidoreductase involved in the biosynthesis of limonoids triterpene natural products such as limonin, a compound with insecticidal activity responsible for the bitter taste in citrus. Catalyzes the formation of kihadalactone A. This chain is Kihadalactone A synthase LFS, found in Citrus sinensis (Sweet orange).